A 505-amino-acid polypeptide reads, in one-letter code: Lysine--tRNA ligase, heat inducible (505 aa).

Lys114 and Lys156 each carry N6-acetyllysine. Mg(2+) is bound by residues Glu415 and Glu422.

This sequence belongs to the class-II aminoacyl-tRNA synthetase family. Homodimer. Mg(2+) is required as a cofactor.

It is found in the cytoplasm. It carries out the reaction tRNA(Lys) + L-lysine + ATP = L-lysyl-tRNA(Lys) + AMP + diphosphate. This Escherichia coli O6:H1 (strain CFT073 / ATCC 700928 / UPEC) protein is Lysine--tRNA ligase, heat inducible (lysU).